The sequence spans 95 residues: Large ribosomal subunit protein bL27 (95 aa).

Residues 1–12 (MLLIKKINLQFF) constitute a propeptide that is removed on maturation. The segment at 17–37 (GVGSTKNGRDSNPKYLGAKKS) is disordered.

Belongs to the bacterial ribosomal protein bL27 family. In terms of processing, the N-terminus is cleaved by ribosomal processing cysteine protease Prp.

This is Large ribosomal subunit protein bL27 from Malacoplasma penetrans (strain HF-2) (Mycoplasma penetrans).